Here is a 535-residue protein sequence, read N- to C-terminus: MMCRSLTLRFFLFIVLLQTCVRGGDVNDNLLSSCLNSHGVHNFTTLSTDTNSDYFKLLHASMQNPLFAKPTVSKPSFIVMPGSKEELSSTVHCCTRESWTIRLRSGGHSYEGLSYTADTPFVIVDMMNLNRISIDVLSETAWVESGATLGELYYAIAQSTDTLGFTAGWCPTVGSGGHISGGGFGMMSRKYGLAADNVVDAILIDSNGAILDREKMGDDVFWAIRGGGGGVWGAIYAWKIKLLPVPEKLTVFRVTKNVGIEDASSLLHKWQYVADELDEDFTVSVLGGVNGNDAWLMFLGLHLGRKDAAKTIIDEKFPELGLVDKEFQEMSWGESMAFLSGLDTISELNNRFLKFDERAFKTKVDFTKVSVPLNVFRHALEMLSEQPGGFIALNGFGGKMSEISTDFTPFPHRKGTKLMFEYIIAWNQDEESKIGEFSEWLAKFYDYLEPFVSKEPRVGYVNHIDLDIGGIDWRNKSSTTNAVEIARNWGERYFSSNYERLVKAKTLIDPNNVFNHPQSIPPMMKFEEIYMLKEL.

Residues 1–23 (MMCRSLTLRFFLFIVLLQTCVRG) form the signal peptide. Residue asparagine 42 is glycosylated (N-linked (GlcNAc...) asparagine). Positions 71–245 (TVSKPSFIVM…YAWKIKLLPV (175 aa)) constitute an FAD-binding PCMH-type domain. Residues 108–170 (HSYEGLSYTA…DTLGFTAGWC (63 aa)) constitute a cross-link (6-(S-cysteinyl)-8alpha-(pros-histidyl)-FAD (His-Cys)). Residue asparagine 475 is glycosylated (N-linked (GlcNAc...) asparagine).

The protein belongs to the oxygen-dependent FAD-linked oxidoreductase family. The cofactor is FAD. Requires a metal cation as cofactor. The FAD cofactor is bound via a bicovalent 6-S-cysteinyl, 8alpha-N1-histidyl FAD linkage. Expressed in roots and stems. Not detected in leaves or reproductive organs. Restricted to the parietal region of sieve elements adjacent or proximal to laticifers.

It localises to the cytoplasmic vesicle. It catalyses the reaction (S)-reticuline + O2 = (S)-scoulerine + H2O2 + H(+). It participates in alkaloid biosynthesis; (S)-scoulerine biosynthesis; (S)-scoulerine from (S)-reticuline: step 1/1. Its function is as follows. Oxygen-dependent FAD-dependent oxidoreductase essential to the formation of benzophenanthridine alkaloids in the response of plants to pathogenic attack. Catalyzes the stereospecific conversion of the N-methyl moiety of (S)-reticuline into the berberine bridge carbon of (S)-scoulerine. Involved in the biosynthesis of sanguinarine. The sequence is that of Reticuline oxidase (BBE1) from Papaver somniferum (Opium poppy).